The chain runs to 22 residues: IILELAAVDSASGKLLINGNFK.

The sequence is that of Unknown protein from spot 168 of 2D-PAGE of etiolated coleoptile from Zea mays (Maize).